The following is a 106-amino-acid chain: Nucleoid-associated protein XAC1110 (106 aa).

The segment covering 80–89 (KIDAESKDRM) has biased composition (basic and acidic residues). The segment at 80-106 (KIDAESKDRMGSATAGMQLPPGMKLPF) is disordered.

This sequence belongs to the YbaB/EbfC family. As to quaternary structure, homodimer.

It localises to the cytoplasm. The protein resides in the nucleoid. Binds to DNA and alters its conformation. May be involved in regulation of gene expression, nucleoid organization and DNA protection. This is Nucleoid-associated protein XAC1110 from Xanthomonas axonopodis pv. citri (strain 306).